The sequence spans 87 residues: Small ribosomal subunit protein bS20 (87 aa).

The interval 1-26 (MANIKSAQKRAVQSEKRRQHNASQRS) is disordered.

The protein belongs to the bacterial ribosomal protein bS20 family.

Functionally, binds directly to 16S ribosomal RNA. This is Small ribosomal subunit protein bS20 from Glaesserella parasuis serovar 5 (strain SH0165) (Haemophilus parasuis).